Here is a 76-residue protein sequence, read N- to C-terminus: UPF0352 protein PC1_1633 (76 aa).

The protein belongs to the UPF0352 family.

The protein is UPF0352 protein PC1_1633 of Pectobacterium carotovorum subsp. carotovorum (strain PC1).